Consider the following 346-residue polypeptide: Peripherin-2 (346 aa).

At methionine 1–asparagine 24 the chain is on the cytoplasmic side. Residues tryptophan 25–isoleucine 43 traverse the membrane as a helical segment. Residues glutamate 44–proline 61 lie on the Lumenal side of the membrane. Residue asparagine 53 is glycosylated (N-linked (GlcNAc...) asparagine). Residues asparagine 62–lysine 80 form a helical membrane-spanning segment. Residues isoleucine 81 to lysine 99 are Cytoplasmic-facing. The chain crosses the membrane as a helical span at residues serine 100–arginine 123. The Lumenal segment spans residues glycine 124–serine 264. The N-linked (GlcNAc...) asparagine glycan is linked to asparagine 229. The chain crosses the membrane as a helical span at residues methionine 265 to leucine 290. Over glutamate 291 to glycine 346 the chain is Cytoplasmic. The tract at residues glutamine 341 to glycine 346 is interaction with MREG.

It belongs to the PRPH2/ROM1 family. In terms of assembly, homodimer; disulfide-linked. Forms a homotetramer. Forms a heterotetramer with ROM1. Homotetramer and heterotetramer core complexes go on to form higher order complexes by formation of intermolecular disulfide bonds. Interacts with MREG. Interacts with STX3. Interacts with SNAP25. In terms of tissue distribution, retina (photoreceptor). In rim region of ROS (rod outer segment) disks.

The protein resides in the membrane. Its subcellular location is the cell projection. It is found in the cilium. The protein localises to the photoreceptor outer segment. It localises to the photoreceptor inner segment. Its function is as follows. Essential for retina photoreceptor outer segment disk morphogenesis, may also play a role with ROM1 in the maintenance of outer segment disk structure. Required for the maintenance of retinal outer nuclear layer thickness. Required for the correct development and organization of the photoreceptor inner segment. This chain is Peripherin-2 (PRPH2), found in Felis catus (Cat).